The primary structure comprises 232 residues: MARRPDLQSGPERLAALVRSSIPPMHSAGLPFVGASLAVALLGRKRRWMRRAGLISAGANAAFFRHPPRVPPTRPGVVVAPADGLICLLGEATPPAELGLPDIPMQRVSIFLSVLDAHVQRAPIGGEVVAVRHRPGRFHSAELEAASEDNERNSVVIRTPEGLHIIAVQIAGLIARRIVCDVHVGDKLSIGDTYGLIRYGSRLDTYFPADARVLVSHGQRTLAGETVLAELA.

Catalysis depends on S201, which acts as the Schiff-base intermediate with substrate; via pyruvic acid. At S201 the chain carries Pyruvic acid (Ser); by autocatalysis.

It belongs to the phosphatidylserine decarboxylase family. PSD-A subfamily. Heterodimer of a large membrane-associated beta subunit and a small pyruvoyl-containing alpha subunit. Requires pyruvate as cofactor. Is synthesized initially as an inactive proenzyme. Formation of the active enzyme involves a self-maturation process in which the active site pyruvoyl group is generated from an internal serine residue via an autocatalytic post-translational modification. Two non-identical subunits are generated from the proenzyme in this reaction, and the pyruvate is formed at the N-terminus of the alpha chain, which is derived from the carboxyl end of the proenzyme. The post-translation cleavage follows an unusual pathway, termed non-hydrolytic serinolysis, in which the side chain hydroxyl group of the serine supplies its oxygen atom to form the C-terminus of the beta chain, while the remainder of the serine residue undergoes an oxidative deamination to produce ammonia and the pyruvoyl prosthetic group on the alpha chain.

The protein localises to the cell membrane. The enzyme catalyses a 1,2-diacyl-sn-glycero-3-phospho-L-serine + H(+) = a 1,2-diacyl-sn-glycero-3-phosphoethanolamine + CO2. It functions in the pathway phospholipid metabolism; phosphatidylethanolamine biosynthesis; phosphatidylethanolamine from CDP-diacylglycerol: step 2/2. In terms of biological role, catalyzes the formation of phosphatidylethanolamine (PtdEtn) from phosphatidylserine (PtdSer). The protein is Phosphatidylserine decarboxylase proenzyme of Mycolicibacterium smegmatis (strain ATCC 700084 / mc(2)155) (Mycobacterium smegmatis).